The chain runs to 212 residues: MNIVVLISGNGSNLQAIIDACKTNKIKGTVRAVFSNKADAFGLERARQAGIATHTLIASAFDSREAYDRELIHEIDMYAPDVVVLAGFMRILSPAFVSHYAGRLLNIHPSLLPKYPGLHTHRQALENGDEEHGTSVHFVTDELDGGPVILQAKVPVFAGDSEDDITARVQTQEHAIYPLVISWFADGRLKMHENAAWLDGQRLPPQGYAADE.

Residue 11–13 (GSN) participates in N(1)-(5-phospho-beta-D-ribosyl)glycinamide binding. Residues R64, 89–92 (MRIL), and N106 contribute to the (6R)-10-formyltetrahydrofolate site. Residue H108 is the Proton donor of the active site. (6R)-10-formyltetrahydrofolate is bound at residue 140–144 (TDELD). A N(1)-(5-phospho-beta-D-ribosyl)glycinamide-binding site is contributed by 170–173 (QTQE).

The protein belongs to the GART family. In terms of assembly, monomer. Homodimer below pH 6.8.

It carries out the reaction N(1)-(5-phospho-beta-D-ribosyl)glycinamide + (6R)-10-formyltetrahydrofolate = N(2)-formyl-N(1)-(5-phospho-beta-D-ribosyl)glycinamide + (6S)-5,6,7,8-tetrahydrofolate + H(+). It functions in the pathway purine metabolism; IMP biosynthesis via de novo pathway; N(2)-formyl-N(1)-(5-phospho-D-ribosyl)glycinamide from N(1)-(5-phospho-D-ribosyl)glycinamide (10-formyl THF route): step 1/1. With respect to regulation, inhibited by N10-(bromoacetyl)-5,8-dideazafolate. Its function is as follows. Catalyzes the transfer of a formyl group from 10-formyltetrahydrofolate to 5-phospho-ribosyl-glycinamide (GAR), producing 5-phospho-ribosyl-N-formylglycinamide (FGAR) and tetrahydrofolate. The chain is Phosphoribosylglycinamide formyltransferase from Escherichia coli (strain K12).